Reading from the N-terminus, the 782-residue chain is LPS-assembly protein LptD (782 aa).

Positions 1–24 (MKKNSYTRLSIAILSTLYSVSSLA) are cleaved as a signal peptide.

The protein belongs to the LptD family. As to quaternary structure, component of the lipopolysaccharide transport and assembly complex. Interacts with LptE and LptA.

The protein resides in the cell outer membrane. Its function is as follows. Together with LptE, is involved in the assembly of lipopolysaccharide (LPS) at the surface of the outer membrane. The protein is LPS-assembly protein LptD of Pasteurella multocida (strain Pm70).